The chain runs to 259 residues: Small ribosomal subunit protein eS1 (259 aa).

Residues 1-18 (MAVGKNKRISKGKKGGKK) are compositionally biased toward basic residues. Residues 1-22 (MAVGKNKRISKGKKGGKKKASD) form a disordered region.

This sequence belongs to the eukaryotic ribosomal protein eS1 family. As to quaternary structure, component of the small ribosomal subunit. Mature ribosomes consist of a small (40S) and a large (60S) subunit. The 40S subunit contains about 33 different proteins and 1 molecule of RNA (18S). The 60S subunit contains about 49 different proteins and 3 molecules of RNA (25S, 5.8S and 5S).

The protein localises to the cytoplasm. The polypeptide is Small ribosomal subunit protein eS1 (Chlamydomonas reinhardtii (Chlamydomonas smithii)).